The following is a 278-amino-acid chain: Release factor glutamine methyltransferase (278 aa).

S-adenosyl-L-methionine-binding positions include 116 to 120 (GTGTG), aspartate 139, tryptophan 168, and asparagine 182. 182–185 (NPPY) serves as a coordination point for substrate.

Belongs to the protein N5-glutamine methyltransferase family. PrmC subfamily.

The enzyme catalyses L-glutaminyl-[peptide chain release factor] + S-adenosyl-L-methionine = N(5)-methyl-L-glutaminyl-[peptide chain release factor] + S-adenosyl-L-homocysteine + H(+). In terms of biological role, methylates the class 1 translation termination release factors RF1/PrfA and RF2/PrfB on the glutamine residue of the universally conserved GGQ motif. This Cereibacter sphaeroides (strain ATCC 17023 / DSM 158 / JCM 6121 / CCUG 31486 / LMG 2827 / NBRC 12203 / NCIMB 8253 / ATH 2.4.1.) (Rhodobacter sphaeroides) protein is Release factor glutamine methyltransferase.